A 301-amino-acid chain; its full sequence is Probable alpha-L-glutamate ligase (301 aa).

The ATP-grasp domain maps to 104-287 (LQLLSRKGIG…VAGMIIQYLE (184 aa)). Residues lysine 141, 178 to 179 (EY), aspartate 187, and 211 to 213 (RSN) contribute to the ATP site. Residues aspartate 248, glutamate 260, and asparagine 262 each contribute to the Mg(2+) site. Residues aspartate 248, glutamate 260, and asparagine 262 each contribute to the Mn(2+) site.

It belongs to the RimK family. Mg(2+) serves as cofactor. Mn(2+) is required as a cofactor.

This Ectopseudomonas mendocina (strain ymp) (Pseudomonas mendocina) protein is Probable alpha-L-glutamate ligase.